The sequence spans 556 residues: Formate--tetrahydrofolate ligase 1 (556 aa).

65–72 (TPAGEGKS) contacts ATP.

The protein belongs to the formate--tetrahydrofolate ligase family.

It catalyses the reaction (6S)-5,6,7,8-tetrahydrofolate + formate + ATP = (6R)-10-formyltetrahydrofolate + ADP + phosphate. It functions in the pathway one-carbon metabolism; tetrahydrofolate interconversion. This Streptococcus pyogenes serotype M4 (strain MGAS10750) protein is Formate--tetrahydrofolate ligase 1.